Consider the following 262-residue polypeptide: DNA-directed RNA polymerase subunit Rpo3 (262 aa).

It belongs to the archaeal Rpo3/eukaryotic RPB3 RNA polymerase subunit family. In terms of assembly, part of the RNA polymerase complex.

The protein resides in the cytoplasm. The catalysed reaction is RNA(n) + a ribonucleoside 5'-triphosphate = RNA(n+1) + diphosphate. DNA-dependent RNA polymerase (RNAP) catalyzes the transcription of DNA into RNA using the four ribonucleoside triphosphates as substrates. The polypeptide is DNA-directed RNA polymerase subunit Rpo3 (Pyrobaculum neutrophilum (strain DSM 2338 / JCM 9278 / NBRC 100436 / V24Sta) (Thermoproteus neutrophilus)).